Reading from the N-terminus, the 179-residue chain is MSRIGKVPVSVPGGVHVRVSSGVVEVEGPKGVLSCAFLPVVTVRVEQEYVIVARCDDSKRARACHGLYRKLLSNMVVGVSEGFSKTLVITGIGYRAEVQGRVLVMALGYSNDFTVLIPSGIEVRVESSTRVIVSGVSKERVGEFAAQLRRLRLPEAYKGKGIRYDYETIVRKVGKSGVK.

It belongs to the universal ribosomal protein uL6 family. As to quaternary structure, part of the 50S ribosomal subunit.

This protein binds to the 23S rRNA, and is important in its secondary structure. It is located near the subunit interface in the base of the L7/L12 stalk, and near the tRNA binding site of the peptidyltransferase center. This Treponema pallidum (strain Nichols) protein is Large ribosomal subunit protein uL6.